We begin with the raw amino-acid sequence, 267 residues long: Multivesicular body subunit 12A (267 aa).

Positions 7-146 (AAPLSGVGWA…SFAIWCKKGA (140 aa)) constitute an MABP domain. Positions 154 to 159 (PVPKPR) match the SH3-binding motif. Residues 210-259 (MDGVPFTLHPKFERSPKSDSSAILTDLTVKSLADIEKEYNYTFVVERTAA) form the UMA domain.

This sequence belongs to the MVB12 family. Component of the ESCRT-I complex (endosomal sorting complex required for transport I).

It localises to the cytoplasm. Its subcellular location is the endosome. The protein resides in the late endosome membrane. Functionally, component of the ESCRT-I complex, a regulator of vesicular trafficking process. Required for the sorting of endocytic ubiquitinated cargos into multivesicular bodies. This is Multivesicular body subunit 12A (MVB12A) from Gallus gallus (Chicken).